A 77-amino-acid chain; its full sequence is Acyl carrier protein (77 aa).

One can recognise a Carrier domain in the interval 1-76; sequence MADFEKVKSI…DVTKFIDNLK (76 aa). S36 carries the O-(pantetheine 4'-phosphoryl)serine modification.

This sequence belongs to the acyl carrier protein (ACP) family. In terms of processing, 4'-phosphopantetheine is transferred from CoA to a specific serine of apo-ACP by AcpS. This modification is essential for activity because fatty acids are bound in thioester linkage to the sulfhydryl of the prosthetic group.

Its subcellular location is the cytoplasm. Its pathway is lipid metabolism; fatty acid biosynthesis. Functionally, carrier of the growing fatty acid chain in fatty acid biosynthesis. The chain is Acyl carrier protein from Leptospira borgpetersenii serovar Hardjo-bovis (strain JB197).